The following is a 47-amino-acid chain: Large ribosomal subunit protein uL14c (47 aa).

This sequence belongs to the universal ribosomal protein uL14 family. In terms of assembly, part of the 50S ribosomal subunit.

It localises to the plastid. The protein resides in the chloroplast. In terms of biological role, binds to 23S rRNA. In Vigna unguiculata (Cowpea), this protein is Large ribosomal subunit protein uL14c (rpl14).